Reading from the N-terminus, the 1630-residue chain is Transient receptor potential cation channel subfamily M member 1 (1630 aa).

Disordered stretches follow at residues 1 to 25 (MGSM…GSQK), 65 to 92 (PLPS…SVSK), 453 to 492 (APPV…EVEE), 620 to 643 (LGME…EEEI), and 824 to 858 (SKEN…HKKQ). Topologically, residues 1–877 (MGSMRKMSSS…CEFYNAPIVK (877 aa)) are cytoplasmic. Residues 8–25 (SSSFKRGSIKSSTSGSQK) show a composition bias toward low complexity. A compositionally biased stretch (polar residues) spans 69-92 (VTPSSTAEDTKQGDAQSGKWSVSK). Residues 474-485 (GRGKGKGKKKGK) are compositionally biased toward basic residues. Composition is skewed to basic and acidic residues over residues 825–834 (KENEDGKEKE) and 845–855 (GSRKGDEENEH). A helical membrane pass occupies residues 878 to 898 (FWFYTISYLGYLLLFNYVILV). Topologically, residues 899 to 944 (RMDGWPSPQEWIVISYIVSLALEKIREILMSEPGKLSQKIKVWLQE) are extracellular. A helical transmembrane segment spans residues 945–965 (YWNITDLVAISMFMVGAILRL). The Cytoplasmic segment spans residues 966–975 (QNQPYMGYGR). Residues 976–996 (VIYCVDIILWYIRVLDIFGVN) traverse the membrane as a helical segment. The Extracellular segment spans residues 997 to 1008 (KYLGPYVMMIGK). A helical membrane pass occupies residues 1009-1029 (MMIDMLYFVVIMLVVLMSFGV). At 1030–1107 (ARQAILHPEE…CIPGAWLTPA (78 aa)) the chain is on the cytoplasmic side. A helical transmembrane segment spans residues 1108-1128 (LMACYLLVANILLVNLLIAVF). N-linked (GlcNAc...) asparagine glycosylation occurs at N1129. Over 1129 to 1158 (NNTFFEVKSISNQVWKFQRYQLIMTFHDRP) the chain is Extracellular. A helical transmembrane segment spans residues 1159–1179 (VLPPPMIILSHIYIIVMRLSG). The Cytoplasmic segment spans residues 1180 to 1630 (RCRKKREGDQ…QEKGNPETEC (451 aa)). Residues 1235 to 1255 (IRVTSERVENMSMRLEEINER) adopt a coiled-coil conformation. Disordered stretches follow at residues 1362–1414 (EDVK…AGEL) and 1575–1630 (CLRS…ETEC).

Belongs to the transient receptor (TC 1.A.4) family. LTrpC subfamily. TRPM1 sub-subfamily. As to quaternary structure, interacts with TRPM3; the interaction results in the formation of a heteromultimeric cation channel complex that are functionally different from the homomeric channels. Interacts with GPR179. Associates with both guanine nucleotide-binding proteins G(o) and beta-gamma G protein dimer; implicated in directly regulating TRPM1 channel open-state.

The protein localises to the cell membrane. It is found in the endoplasmic reticulum membrane. It localises to the cell projection. Its subcellular location is the axon. It catalyses the reaction Ca(2+)(in) = Ca(2+)(out). The enzyme catalyses Mg(2+)(in) = Mg(2+)(out). It carries out the reaction Mn(2+)(in) = Mn(2+)(out). The catalysed reaction is Ni(2+)(in) = Ni(2+)(out). With respect to regulation, inhibited by extracellular zinc ions. Inhibited by intracellular Mg(2+). Activated by the neuroactive steroid pregnenolone sulfate. Negatively regulated by activation of GRM6 receptors in the ON-bipolar cells. Functionally, constitutively open nonselective divalent cation-conducting channels which mediate the influx of Ca(2+), Mg(2+), Mn(2+), Ba(2+), and Ni(2+) into the cytoplasm, leading to membrane depolarization. Impermeable to zinc ions. In addition, forms heteromultimeric ion channels with TRPM3 which are permeable for calcium and zinc ions. Plays an essential role for the depolarizing photoresponse of retinal ON bipolar cells. In the dark, tonic release of glutamate activates the G-protein coupled receptor for glutamate GRM6, its activation induces the release of G(o) protein and the beta-gamma G protein dimer. Both subunits can interact and inactivate the TRPM1 channel. A light onset, induces decrease in glutamate release and deactivation of GRM6 leading to channel opening and membrane depolarization. May play a role in metastasis suppression. This Rattus norvegicus (Rat) protein is Transient receptor potential cation channel subfamily M member 1.